Consider the following 319-residue polypeptide: Methionyl-tRNA formyltransferase (319 aa).

Position 110–113 (Ser-110–Pro-113) interacts with (6S)-5,6,7,8-tetrahydrofolate.

The protein belongs to the Fmt family.

The catalysed reaction is L-methionyl-tRNA(fMet) + (6R)-10-formyltetrahydrofolate = N-formyl-L-methionyl-tRNA(fMet) + (6S)-5,6,7,8-tetrahydrofolate + H(+). In terms of biological role, attaches a formyl group to the free amino group of methionyl-tRNA(fMet). The formyl group appears to play a dual role in the initiator identity of N-formylmethionyl-tRNA by promoting its recognition by IF2 and preventing the misappropriation of this tRNA by the elongation apparatus. The sequence is that of Methionyl-tRNA formyltransferase from Geobacillus thermodenitrificans (strain NG80-2).